A 55-amino-acid polypeptide reads, in one-letter code: Large ribosomal subunit protein bL33A (55 aa).

It belongs to the bacterial ribosomal protein bL33 family.

The protein is Large ribosomal subunit protein bL33A of Mycobacterium ulcerans (strain Agy99).